We begin with the raw amino-acid sequence, 175 residues long: Arsenite oxidase subunit AioB (175 aa).

The tat-type signal signal peptide spans M1–A32. Residues N62–L158 enclose the Rieske domain. Positions 102, 104, 120, and 123 each coordinate [2Fe-2S] cluster. C107 and C122 are joined by a disulfide.

The protein belongs to the AOX family. As to quaternary structure, heterodimer consisting of a large and a small subunit. It depends on [2Fe-2S] cluster as a cofactor. Predicted to be exported by the Tat system. The position of the signal peptide cleavage has not been experimentally proven.

The enzyme catalyses 2 oxidized [azurin] + arsenite + H2O = 2 reduced [azurin] + arsenate + 3 H(+). In terms of biological role, involved in the detoxification of arsenic. Oxidizes As(III)O3(3-) (arsenite) to the somewhat less toxic As(V)O4(3-) (arsenate). The protein is Arsenite oxidase subunit AioB (aioB) of Alcaligenes faecalis.